The following is a 157-amino-acid chain: SsrA-binding protein (157 aa).

Positions 134–151 (HDKRETEKKRDWSKEKGR) are enriched in basic and acidic residues. A disordered region spans residues 134 to 157 (HDKRETEKKRDWSKEKGRLMRAKG).

This sequence belongs to the SmpB family.

Its subcellular location is the cytoplasm. Its function is as follows. Required for rescue of stalled ribosomes mediated by trans-translation. Binds to transfer-messenger RNA (tmRNA), required for stable association of tmRNA with ribosomes. tmRNA and SmpB together mimic tRNA shape, replacing the anticodon stem-loop with SmpB. tmRNA is encoded by the ssrA gene; the 2 termini fold to resemble tRNA(Ala) and it encodes a 'tag peptide', a short internal open reading frame. During trans-translation Ala-aminoacylated tmRNA acts like a tRNA, entering the A-site of stalled ribosomes, displacing the stalled mRNA. The ribosome then switches to translate the ORF on the tmRNA; the nascent peptide is terminated with the 'tag peptide' encoded by the tmRNA and targeted for degradation. The ribosome is freed to recommence translation, which seems to be the essential function of trans-translation. The sequence is that of SsrA-binding protein from Rhodopseudomonas palustris (strain BisA53).